We begin with the raw amino-acid sequence, 448 residues long: Vacuolar amino acid transporter 6 (448 aa).

Topologically, residues 1–7 are cytoplasmic; the sequence is MVASIRS. The chain crosses the membrane as a helical span at residues 8 to 28; it reads GVLTLLHTACGAGILAMPYAF. The Vacuolar portion of the chain corresponds to 29–32; it reads KPFG. Residues 33–53 traverse the membrane as a helical segment; it reads LIPGVIMIVLCGACAMQSLFI. Residues 54–80 are Cytoplasmic-facing; the sequence is QARVAKYVPQGRASFSALTRLINPNLG. Residues 81-101 form a helical membrane-spanning segment; that stretch reads IVFDLAIAIKCFGVGVSYMIV. At 102-125 the chain is on the vacuolar side; the sequence is VGDLMPQIMSVWTRNAWLLNRNVQ. A helical transmembrane segment spans residues 126 to 146; the sequence is ISLIMLFFVAPLSFLKKLNSL. Residues 147–150 are Cytoplasmic-facing; it reads RYAS. A helical transmembrane segment spans residues 151–171; sequence MVAISSVAYLCVLVLLHYVAP. The Vacuolar portion of the chain corresponds to 172 to 195; sequence SDEILRLKGRISYLLPPQSHDLNV. A helical transmembrane segment spans residues 196 to 216; it reads LNTLPIFVFAYTCHHNMFSII. The Cytoplasmic portion of the chain corresponds to 217–229; that stretch reads NEQRSSRFEHVMK. A helical membrane pass occupies residues 230–250; the sequence is IPLIAISLALILYIAIGCAGY. Topologically, residues 251-267 are vacuolar; it reads LTFGDNIIGNIIMLYPQ. The chain crosses the membrane as a helical span at residues 268–288; it reads AVSSTIGRIAIVLLVMLAFPL. At 289–357 the chain is on the cytoplasmic side; sequence QCHPARASIH…PKETPLRGKS (69 aa). Ser344 bears the Phosphoserine mark. The helical transmembrane segment at 358–378 threads the bilayer; it reads FIVITCSILVASYLVAISVSS. Residues 379–381 are Vacuolar-facing; sequence LAR. A helical membrane pass occupies residues 382–402; sequence VLAIVGATGSTSISFILPGLF. Residues 403–424 lie on the Cytoplasmic side of the membrane; it reads GYKLIGTEHKTAVPLTTKIFKY. A helical membrane pass occupies residues 425 to 445; that stretch reads TGLLLFIWGLIIMITCLTAAL. Over 446 to 448 the chain is Vacuolar; it reads KLN.

It belongs to the amino acid/polyamine transporter 2 family.

The protein resides in the vacuole membrane. Involved in amino acid efflux from the vacuole to the cytoplasm. Capable of transporting aspartate and glutamate. Requires ATP for function. In Saccharomyces cerevisiae (strain ATCC 204508 / S288c) (Baker's yeast), this protein is Vacuolar amino acid transporter 6 (AVT6).